A 214-amino-acid chain; its full sequence is ER lumen protein-retaining receptor 3 (214 aa).

The Lumenal segment spans residues 1 to 4 (MNVF). A helical transmembrane segment spans residues 5 to 24 (RISGDVSHLLAIIILLLKMW). The Cytoplasmic portion of the chain corresponds to 25-32 (KSKSCAGI). The helical transmembrane segment at 33–52 (SGKSQLLFALVFTTRYLDLF) threads the bilayer. Residues 47–48 (RY) are interaction with the K-D-E-L motif on target proteins. The Lumenal portion of the chain corresponds to 53-58 (TVFISA). The chain crosses the membrane as a helical span at residues 59–79 (YNTVMKIVFLVCAYVTVYLIY). The Cytoplasmic segment spans residues 80-92 (GKFRKAYDSENDT). A helical transmembrane segment spans residues 93-110 (FRLEFLLVPVIGLSFLEN). Residues 111–116 (YEFTPL) are Lumenal-facing. Residues 117–135 (EILWTFSIYLESVAILPQL) form a helical membrane-spanning segment. The Cytoplasmic portion of the chain corresponds to 136–149 (FMISKTGEAESITT). A helical membrane pass occupies residues 150 to 168 (HYLFFLGLYRVLYLANWIW). Residues 159 to 169 (RVLYLANWIWR) are interaction with the K-D-E-L motif on target proteins. Topologically, residues 169-178 (RYHTEKFYDQ) are lumenal. Residues 179–199 (IAVVSGVVQTIFYFDFFYLYI) form a helical membrane-spanning segment. The Cytoplasmic segment spans residues 200 to 214 (TKVLKGKKLSLPMPV). The tract at residues 204–207 (KGKK) is important for recycling of cargo proteins with the sequence motif K-D-E-L from the Golgi to the endoplasmic reticulum.

Belongs to the ERD2 family.

Its subcellular location is the endoplasmic reticulum membrane. The protein localises to the golgi apparatus membrane. The protein resides in the cytoplasmic vesicle. It localises to the COPI-coated vesicle membrane. Receptor for the C-terminal sequence motif K-D-E-L that is present on endoplasmic reticulum resident proteins and that mediates their recycling from the Golgi back to the endoplasmic reticulum. The polypeptide is ER lumen protein-retaining receptor 3 (kdelr3) (Xenopus tropicalis (Western clawed frog)).